The sequence spans 379 residues: Fructose-1,6-bisphosphate aldolase/phosphatase (379 aa).

Residue D13 is the Proton acceptor; for FBP phosphatase activity of the active site. Mg(2+) contacts are provided by D13, H20, D51, and D52. H20 contributes to the beta-D-fructose 1,6-bisphosphate binding site. H20 contributes to the dihydroxyacetone phosphate binding site. Y89 serves as a coordination point for beta-D-fructose 1,6-bisphosphate. Q93 contacts Mg(2+). Beta-D-fructose 1,6-bisphosphate is bound at residue 102–103 (GN). D130 contacts Mg(2+). Residue K131 coordinates beta-D-fructose 1,6-bisphosphate. Residue K131 participates in dihydroxyacetone phosphate binding. The active-site Proton donor/acceptor; for FBP aldolase activity is Y227. Mg(2+)-binding residues include K230, D231, and D232. Catalysis depends on K230, which acts as the Schiff-base intermediate with DHAP; for FBP aldolase activity. Residues 240–241 (QS), R264, D285, and Y346 each bind beta-D-fructose 1,6-bisphosphate. Residues R264 and D285 each coordinate dihydroxyacetone phosphate.

The protein belongs to the FBP aldolase/phosphatase family. Homooctamer; dimer of tetramers. Mg(2+) serves as cofactor.

It carries out the reaction beta-D-fructose 1,6-bisphosphate + H2O = beta-D-fructose 6-phosphate + phosphate. The enzyme catalyses beta-D-fructose 1,6-bisphosphate = D-glyceraldehyde 3-phosphate + dihydroxyacetone phosphate. The protein operates within carbohydrate biosynthesis; gluconeogenesis. Its function is as follows. Catalyzes two subsequent steps in gluconeogenesis: the aldol condensation of dihydroxyacetone phosphate (DHAP) and glyceraldehyde-3-phosphate (GA3P) to fructose-1,6-bisphosphate (FBP), and the dephosphorylation of FBP to fructose-6-phosphate (F6P). This is Fructose-1,6-bisphosphate aldolase/phosphatase from Moorella thermoacetica (strain ATCC 39073 / JCM 9320).